Here is a 208-residue protein sequence, read N- to C-terminus: Uracil phosphoribosyltransferase (208 aa).

5-phospho-alpha-D-ribose 1-diphosphate is bound by residues arginine 78, arginine 103, and 130–138; that span reads DPMLATGGS. Residues isoleucine 193 and 198-200 each bind uracil; that span reads GDA. Aspartate 199 contributes to the 5-phospho-alpha-D-ribose 1-diphosphate binding site.

This sequence belongs to the UPRTase family. Requires Mg(2+) as cofactor.

It carries out the reaction UMP + diphosphate = 5-phospho-alpha-D-ribose 1-diphosphate + uracil. Its pathway is pyrimidine metabolism; UMP biosynthesis via salvage pathway; UMP from uracil: step 1/1. With respect to regulation, allosterically activated by GTP. Catalyzes the conversion of uracil and 5-phospho-alpha-D-ribose 1-diphosphate (PRPP) to UMP and diphosphate. This is Uracil phosphoribosyltransferase from Neisseria meningitidis serogroup A / serotype 4A (strain DSM 15465 / Z2491).